The sequence spans 489 residues: Endothelial zinc finger protein induced by tumor necrosis factor alpha (489 aa).

The span at 1 to 15 shows a compositional bias: basic and acidic residues; sequence MKELDPKNDISEDKL. 2 disordered regions span residues 1 to 61 and 98 to 122; these read MKEL…PLGI and EKGA…KPPM. C2H2-type zinc fingers lie at residues 130 to 152, 158 to 180, 186 to 208, 214 to 236, 242 to 264, 270 to 292, 298 to 320, 326 to 348, 354 to 376, 382 to 404, 410 to 432, 438 to 460, and 466 to 488; these read YDCS…QRIH, FECD…QRVH, YACG…QRTH, YVCD…ERIH, YVCP…QRTH, YACK…QRNH, YVCG…QRFH, FECS…QRIH, YECY…QIVH, YVCG…QRIH, YRCG…QRIH, and YRCG…LRIH.

Belongs to the krueppel C2H2-type zinc-finger protein family. Highly expressed in placenta, followed by brain, testis, pancreas, heart, small intestine, muscle, uterus, prostate and peripheral blood leukocytes. Not detected in liver, lung, colon, stomach, salivary and thyroid gland.

It is found in the nucleus. Its function is as follows. May be involved in transcriptional regulation. This Homo sapiens (Human) protein is Endothelial zinc finger protein induced by tumor necrosis factor alpha (ZNF71).